Here is a 927-residue protein sequence, read N- to C-terminus: Phospholipase D beta 2 (927 aa).

Residues 104 to 237 (PFGKASLKVL…YSGARIEGTY (134 aa)) form the C2 domain. Aspartate 299 serves as a coordination point for Ca(2+). One can recognise a PLD phosphodiesterase 1 domain in the interval 439-474 (TIYTHHQKNLIVDADAGGNRRKIVAFVGGLDLCDGR). Residues histidine 444, lysine 446, and aspartate 451 contribute to the active site. Histidine 444 provides a ligand contact to a 1,2-diacyl-sn-glycero-3-phosphate. Ca(2+) is bound by residues histidine 480 and histidine 512. Glutamine 640 and histidine 778 together coordinate a 1,2-diacyl-sn-glycero-3-phosphate. The region spanning 773 to 800 (FMIYVHSKGMVVDDEYVVIGSANINQRS) is the PLD phosphodiesterase 2 domain. Residues histidine 778, lysine 780, and aspartate 785 contribute to the active site. Glutamate 841 provides a ligand contact to Ca(2+).

This sequence belongs to the phospholipase D family. C2-PLD subfamily. The cofactor is Ca(2+). Expressed in stems, and to a lower amount in leaves, flowers and siliques.

The protein localises to the cytoplasm. Its subcellular location is the membrane. It carries out the reaction a 1,2-diacyl-sn-glycero-3-phosphocholine + H2O = a 1,2-diacyl-sn-glycero-3-phosphate + choline + H(+). Its activity is regulated as follows. Inhibited by neomycin. Its function is as follows. Hydrolyzes glycerol-phospholipids at the terminal phosphodiesteric bond to generate phosphatidic acids (PA). Plays an important role in various cellular processes, including phytohormone action, vesicular trafficking, secretion, cytoskeletal arrangement, meiosis, tumor promotion, pathogenesis, membrane deterioration and senescence. Can use phosphatidylserine or N-acylphosphatidylethanolamine as substrates. The polypeptide is Phospholipase D beta 2 (Arabidopsis thaliana (Mouse-ear cress)).